Consider the following 631-residue polypeptide: Chaperone protein DnaK (631 aa).

Threonine 175 carries the phosphothreonine; by autocatalysis modification. Residues 586–631 (GAEGAAAGAGAAGAAGAGASAGSASGSDDDTVEAEVVDDDDDKDNK) form a disordered region. A compositionally biased stretch (low complexity) spans 602-611 (AGASAGSASG). A compositionally biased stretch (acidic residues) spans 612-631 (SDDDTVEAEVVDDDDDKDNK).

The protein belongs to the heat shock protein 70 family.

In terms of biological role, acts as a chaperone. The protein is Chaperone protein DnaK of Bifidobacterium longum subsp. infantis (strain ATCC 15697 / DSM 20088 / JCM 1222 / NCTC 11817 / S12).